We begin with the raw amino-acid sequence, 280 residues long: Maltodextrin transport system permease protein MalD (280 aa).

The next 6 helical transmembrane spans lie at 15-35, 77-97, 110-130, 142-162, 200-220, and 244-264; these read LTYLYLIGLSIVIIYPLLITI, LIIALITMAVQTSIIVLAGYA, LVFFLIIQMVPTMAALTAFFV, WFLIFLYVGGGIPMNAWLMKG, VQALWAFMGPFGDYILSSFLL, and IAYFSAGAILIALPICILFFF. The ABC transmembrane type-1 domain occupies 73-265; it reads YLNTLIIALI…LPICILFFFL (193 aa).

It belongs to the binding-protein-dependent transport system permease family. MalFG subfamily.

The protein localises to the cell membrane. Part of the binding-protein-dependent transport system for maltodextrin; probably responsible for the translocation of the substrate across the membrane. The chain is Maltodextrin transport system permease protein MalD (malD) from Streptococcus pneumoniae (strain ATCC BAA-255 / R6).